Reading from the N-terminus, the 368-residue chain is tRNA-specific 2-thiouridylase MnmA (368 aa).

ATP-binding positions include 12 to 19 and Met-38; that span reads GMSGGVDS. Positions 98-100 are interaction with target base in tRNA; it reads NPD. Cys-103 serves as the catalytic Nucleophile. Cys-103 and Cys-200 are disulfide-bonded. An ATP-binding site is contributed by Gly-128. An interaction with tRNA region spans residues 150–152; sequence KDQ. Cys-200 acts as the Cysteine persulfide intermediate in catalysis. An interaction with tRNA region spans residues 313-314; sequence RY.

It belongs to the MnmA/TRMU family. In terms of assembly, interacts with TusE.

The protein localises to the cytoplasm. The enzyme catalyses S-sulfanyl-L-cysteinyl-[protein] + uridine(34) in tRNA + AH2 + ATP = 2-thiouridine(34) in tRNA + L-cysteinyl-[protein] + A + AMP + diphosphate + H(+). In terms of biological role, catalyzes the 2-thiolation of uridine at the wobble position (U34) of tRNA(Lys), tRNA(Glu) and tRNA(Gln), leading to the formation of s(2)U34, the first step of tRNA-mnm(5)s(2)U34 synthesis. Sulfur is provided by IscS, via a sulfur-relay system. Binds ATP and its substrate tRNAs. This chain is tRNA-specific 2-thiouridylase MnmA, found in Pectobacterium atrosepticum (strain SCRI 1043 / ATCC BAA-672) (Erwinia carotovora subsp. atroseptica).